Here is a 71-residue protein sequence, read N- to C-terminus: MADDQSLSARIEALEMRLTYQDETIETLNQAVTAQWQQIDALTRQIAALSDRLAQAETSVAAPANERPPHY.

This sequence belongs to the SlyX family.

The sequence is that of Protein SlyX homolog from Rhodopseudomonas palustris (strain HaA2).